A 671-amino-acid chain; its full sequence is MSRDDVQRWKDKYLENIEQQERLQRRWDARIDLLRRGLVRSSLAAEGSDKAVDQCMKELREILRRDDMDAGLSGLIPRLEKAVLDSEQRRQQRTQQNIDALGELAQQLLALDLPRELRKPLKQFARDIEERARQSREIPILLSELSRLQRQALAERKGGDAEDGRPSLLQRLFGGKESETTAEPSASVPSVVAASNTPIQPAAAAPSLPVAEHDEAPGGPPQPLPARTVAAIESAPAGWVGVAERGEPNQILLDEPREIWLDSLPLPAGLSFSETLEEAGAEPSPAMPADVESAPEAPATPVDNLDGQAVDEAYELPPPIPEPGYSAVAPHIEASLLRLLDGLSLPSSHQPQAEALRERIDGSLNWYELVPVLDDLAVLVLSLADSGQRDFEEYLRQLNERLESFLGHLGDAHAGYTDVLDNARGFDQSLREQVSGLQASVQQATDLNSLKLAVDSRLNGLLASMDEHQREQAEHEQEVSGRLQALMERVNSMEQDAKAFHSHLEDQRQKALTDPLTGLPNRAALSERLEQEVARRHRDGGDLLLAVLDIDHFKRINDDFGHLAGDKVLKIIAGELRKRLRQADFIARFGGEEFVVLLPATSLEAGRQLLERLRAAIAACPFHFKGEPLSITCSAGITAFEGNEAGEAVFERADQALYRAKRAGRDRLEVA.

2 disordered regions span residues 204–223 and 278–298; these read AAPSLPVAEHDEAPGGPPQP and EAGAEPSPAMPADVESAPEAP. Residue Asp549 coordinates Mg(2+). Positions 557, 562, and 566 each coordinate substrate. Glu592 serves as a coordination point for Mg(2+). Glu592 is a catalytic residue.

As to quaternary structure, homodimer. It depends on Mg(2+) as a cofactor.

The protein resides in the cell inner membrane. The catalysed reaction is 2 GTP = 3',3'-c-di-GMP + 2 diphosphate. It participates in purine metabolism; 3',5'-cyclic di-GMP biosynthesis. Functionally, catalyzes the synthesis of cyclic-di-GMP (c-di-GMP) via the condensation of 2 GTP molecules. Cyclic-di-GMP is a second messenger which controls cell surface-associated traits in bacteria. Localizes at the cell poles through interaction with FimV where it increases the local pools of c-di-GMP. The chain is Diguanylate cyclase DgcP (dgcP) from Pseudomonas aeruginosa (strain ATCC 15692 / DSM 22644 / CIP 104116 / JCM 14847 / LMG 12228 / 1C / PRS 101 / PAO1).